A 308-amino-acid polypeptide reads, in one-letter code: Inosose dehydratase (308 aa).

It belongs to the IolE/MocC family. The cofactor is glutathione. Co(2+) is required as a cofactor. Mn(2+) serves as cofactor.

The enzyme catalyses scyllo-inosose = 3D-3,5/4-trihydroxycyclohexane-1,2-dione + H2O. It participates in polyol metabolism; myo-inositol degradation into acetyl-CoA; acetyl-CoA from myo-inositol: step 2/7. Its function is as follows. Catalyzes the dehydration of inosose (2-keto-myo-inositol, 2KMI or 2,4,6/3,5-pentahydroxycyclohexanone) to 3D-(3,5/4)-trihydroxycyclohexane-1,2-dione (D-2,3-diketo-4-deoxy-epi-inositol). This Geobacillus kaustophilus (strain HTA426) protein is Inosose dehydratase.